A 223-amino-acid polypeptide reads, in one-letter code: Adenylate kinase (223 aa).

10-15 (GSGKGT) is an ATP binding site. Residues 30 to 59 (ESGAIFREHIGGGTELGMKAKGYIDKGELV) are NMP. Residues serine 31, arginine 36, 57–59 (ELV), 84–87 (GFPR), and glutamine 91 each bind AMP. The tract at residues 125–164 (GRRLCANDPNHPNNIFIDAIKPNGDKCRVCGGDLKTRSDD) is LID. Arginine 126 contacts ATP. Positions 161 and 173 each coordinate AMP. Residue glycine 209 participates in ATP binding.

The protein belongs to the adenylate kinase family. As to quaternary structure, monomer.

It is found in the cytoplasm. It catalyses the reaction AMP + ATP = 2 ADP. The protein operates within purine metabolism; AMP biosynthesis via salvage pathway; AMP from ADP: step 1/1. Functionally, catalyzes the reversible transfer of the terminal phosphate group between ATP and AMP. Plays an important role in cellular energy homeostasis and in adenine nucleotide metabolism. The protein is Adenylate kinase of Solidesulfovibrio magneticus (strain ATCC 700980 / DSM 13731 / RS-1) (Desulfovibrio magneticus).